A 119-amino-acid polypeptide reads, in one-letter code: MVQENKNFATAKAKSVRVSPRKLNLVAAFIRNMKVSEALVQLTFSSKRIAKVVKGCLQSAVANAENNLGLDIDRLVITKATVGKALVMKRVMPRAKGRATRINKFFSNLYITVTEKEDN.

The protein belongs to the universal ribosomal protein uL22 family. In terms of assembly, part of the 50S ribosomal subunit.

Functionally, this protein binds specifically to 23S rRNA; its binding is stimulated by other ribosomal proteins, e.g. L4, L17, and L20. It is important during the early stages of 50S assembly. It makes multiple contacts with different domains of the 23S rRNA in the assembled 50S subunit and ribosome. In terms of biological role, the globular domain of the protein is located near the polypeptide exit tunnel on the outside of the subunit, while an extended beta-hairpin is found that lines the wall of the exit tunnel in the center of the 70S ribosome. The chain is Large ribosomal subunit protein uL22 from Rickettsia akari (strain Hartford).